Here is a 274-residue protein sequence, read N- to C-terminus: Large ribosomal subunit protein uL2 (274 aa).

Disordered regions lie at residues alanine 28 to isoleucine 54 and valine 224 to lysine 274. The span at lysine 263 to lysine 274 shows a compositional bias: basic and acidic residues.

This sequence belongs to the universal ribosomal protein uL2 family. As to quaternary structure, part of the 50S ribosomal subunit. Forms a bridge to the 30S subunit in the 70S ribosome.

One of the primary rRNA binding proteins. Required for association of the 30S and 50S subunits to form the 70S ribosome, for tRNA binding and peptide bond formation. It has been suggested to have peptidyltransferase activity; this is somewhat controversial. Makes several contacts with the 16S rRNA in the 70S ribosome. In Pseudomonas savastanoi pv. phaseolicola (strain 1448A / Race 6) (Pseudomonas syringae pv. phaseolicola (strain 1448A / Race 6)), this protein is Large ribosomal subunit protein uL2.